A 346-amino-acid chain; its full sequence is Phosphoribosylformylglycinamidine cyclo-ligase (346 aa).

The protein belongs to the AIR synthase family.

Its subcellular location is the cytoplasm. The catalysed reaction is 2-formamido-N(1)-(5-O-phospho-beta-D-ribosyl)acetamidine + ATP = 5-amino-1-(5-phospho-beta-D-ribosyl)imidazole + ADP + phosphate + H(+). It functions in the pathway purine metabolism; IMP biosynthesis via de novo pathway; 5-amino-1-(5-phospho-D-ribosyl)imidazole from N(2)-formyl-N(1)-(5-phospho-D-ribosyl)glycinamide: step 2/2. The sequence is that of Phosphoribosylformylglycinamidine cyclo-ligase from Bacillus cereus (strain B4264).